We begin with the raw amino-acid sequence, 1131 residues long: Phytochrome A (1131 aa).

The segment at 1–23 (MSSSRPAHSSSSSSRTRQSSRAR) is disordered. One can recognise a GAF domain in the interval 219–404 (SMEALCNTVV…VFAVHVNKEF (186 aa)). Cys324 serves as a coordination point for phytochromobilin. PAS domains follow at residues 620–690 (VTSE…LQGR) and 750–834 (VEGD…LAGE). In terms of domain architecture, Histidine kinase spans 904-1124 (YMRHAINKPL…TFILTAELAA (221 aa)).

It belongs to the phytochrome family. Homodimer. In terms of processing, contains one covalently linked phytochromobilin chromophore.

Regulatory photoreceptor which exists in two forms that are reversibly interconvertible by light: the Pr form that absorbs maximally in the red region of the spectrum and the Pfr form that absorbs maximally in the far-red region. Photoconversion of Pr to Pfr induces an array of morphogenic responses, whereas reconversion of Pfr to Pr cancels the induction of those responses. Pfr controls the expression of a number of nuclear genes including those encoding the small subunit of ribulose-bisphosphate carboxylase, chlorophyll A/B binding protein, protochlorophyllide reductase, rRNA, etc. It also controls the expression of its own gene(s) in a negative feedback fashion. The polypeptide is Phytochrome A (PHYA1) (Zea mays (Maize)).